The sequence spans 393 residues: Inulin fructotransferase [DFA-I-forming] (393 aa).

The catalysed reaction is Produces alpha-D-fructofuranose beta-D-fructofuranose 1,2':2,1'-dianhydride (DFA I) by successively eliminating the diminishing (2-&gt;1)-beta-D-fructan (inulin) chain from the terminal D-fructosyl-D-fructosyl disaccharide.. The protein is Inulin fructotransferase [DFA-I-forming] of Arthrobacter globiformis.